The primary structure comprises 272 residues: Hydroxyacylglutathione hydrolase (272 aa).

Residues His62, His64, Asp66, His67, His126, Asp146, and His184 each contribute to the Zn(2+) site.

The protein belongs to the metallo-beta-lactamase superfamily. Glyoxalase II family. Monomer. It depends on Zn(2+) as a cofactor.

The catalysed reaction is an S-(2-hydroxyacyl)glutathione + H2O = a 2-hydroxy carboxylate + glutathione + H(+). It participates in secondary metabolite metabolism; methylglyoxal degradation; (R)-lactate from methylglyoxal: step 2/2. In terms of biological role, thiolesterase that catalyzes the hydrolysis of S-D-lactoyl-glutathione to form glutathione and D-lactic acid. This is Hydroxyacylglutathione hydrolase from Saccharophagus degradans (strain 2-40 / ATCC 43961 / DSM 17024).